The following is an 876-amino-acid chain: Alanine--tRNA ligase (876 aa).

Histidine 565, histidine 569, cysteine 667, and histidine 671 together coordinate Zn(2+).

It belongs to the class-II aminoacyl-tRNA synthetase family. It depends on Zn(2+) as a cofactor.

The protein localises to the cytoplasm. It carries out the reaction tRNA(Ala) + L-alanine + ATP = L-alanyl-tRNA(Ala) + AMP + diphosphate. In terms of biological role, catalyzes the attachment of alanine to tRNA(Ala) in a two-step reaction: alanine is first activated by ATP to form Ala-AMP and then transferred to the acceptor end of tRNA(Ala). Also edits incorrectly charged Ser-tRNA(Ala) and Gly-tRNA(Ala) via its editing domain. This chain is Alanine--tRNA ligase, found in Staphylococcus aureus (strain MSSA476).